The following is a 233-amino-acid chain: 7-cyano-7-deazaguanine synthase (233 aa).

13–23 (LSGGLDSATAM) serves as a coordination point for ATP. Positions 197, 207, 210, and 213 each coordinate Zn(2+).

The protein belongs to the QueC family. Zn(2+) is required as a cofactor.

The enzyme catalyses 7-carboxy-7-deazaguanine + NH4(+) + ATP = 7-cyano-7-deazaguanine + ADP + phosphate + H2O + H(+). Its pathway is purine metabolism; 7-cyano-7-deazaguanine biosynthesis. Its function is as follows. Catalyzes the ATP-dependent conversion of 7-carboxy-7-deazaguanine (CDG) to 7-cyano-7-deazaguanine (preQ(0)). This Desulfatibacillum aliphaticivorans protein is 7-cyano-7-deazaguanine synthase.